The sequence spans 223 residues: Ribosome maturation factor RimM (223 aa).

The span at M1 to P12 shows a compositional bias: low complexity. Disordered stretches follow at residues M1–L44 and V203–G223. In terms of domain architecture, PRC barrel spans D135–L210.

Belongs to the RimM family. As to quaternary structure, binds ribosomal protein uS19.

It localises to the cytoplasm. In terms of biological role, an accessory protein needed during the final step in the assembly of 30S ribosomal subunit, possibly for assembly of the head region. Essential for efficient processing of 16S rRNA. May be needed both before and after RbfA during the maturation of 16S rRNA. It has affinity for free ribosomal 30S subunits but not for 70S ribosomes. This Methylorubrum extorquens (strain CM4 / NCIMB 13688) (Methylobacterium extorquens) protein is Ribosome maturation factor RimM.